Consider the following 222-residue polypeptide: MSEFNFDPYRRYGGGMAPMAPQSRYVLPSYIERTAYGVKEMNPYNKLFEERIIFVGVQIDDTSANDIIAQMMTLEHIDSDRDITLYINSPGGSFTSLMAIYDTMQFVRPDIQTVCVGQAASAAAVLLAGGTKGKRTALPNSRILIHQPATEGTHGQASDVEIMANEIMRIRHQLETILAKHTGRSVEEISRDIERDKILTAEEAKEYGIVDDVLPYRKASLK.

Ser-121 (nucleophile) is an active-site residue. His-146 is an active-site residue.

This sequence belongs to the peptidase S14 family. As to quaternary structure, fourteen ClpP subunits assemble into 2 heptameric rings which stack back to back to give a disk-like structure with a central cavity, resembling the structure of eukaryotic proteasomes.

It localises to the cytoplasm. It carries out the reaction Hydrolysis of proteins to small peptides in the presence of ATP and magnesium. alpha-casein is the usual test substrate. In the absence of ATP, only oligopeptides shorter than five residues are hydrolyzed (such as succinyl-Leu-Tyr-|-NHMec, and Leu-Tyr-Leu-|-Tyr-Trp, in which cleavage of the -Tyr-|-Leu- and -Tyr-|-Trp bonds also occurs).. Cleaves peptides in various proteins in a process that requires ATP hydrolysis. Has a chymotrypsin-like activity. Plays a major role in the degradation of misfolded proteins. In Thermobifida fusca (strain YX), this protein is ATP-dependent Clp protease proteolytic subunit 1.